Consider the following 313-residue polypeptide: Ribosomal protein L11 methyltransferase (313 aa).

Residues Thr164, Gly185, Asp207, and Asn249 each contribute to the S-adenosyl-L-methionine site.

The protein belongs to the methyltransferase superfamily. PrmA family.

The protein localises to the cytoplasm. The enzyme catalyses L-lysyl-[protein] + 3 S-adenosyl-L-methionine = N(6),N(6),N(6)-trimethyl-L-lysyl-[protein] + 3 S-adenosyl-L-homocysteine + 3 H(+). In terms of biological role, methylates ribosomal protein L11. In Clostridium perfringens (strain ATCC 13124 / DSM 756 / JCM 1290 / NCIMB 6125 / NCTC 8237 / Type A), this protein is Ribosomal protein L11 methyltransferase.